The primary structure comprises 100 residues: Small ribosomal subunit protein uS14 (100 aa).

Belongs to the universal ribosomal protein uS14 family. In terms of assembly, part of the 30S ribosomal subunit. Contacts proteins S3 and S10.

Functionally, binds 16S rRNA, required for the assembly of 30S particles and may also be responsible for determining the conformation of the 16S rRNA at the A site. The polypeptide is Small ribosomal subunit protein uS14 (Acaryochloris marina (strain MBIC 11017)).